Reading from the N-terminus, the 377-residue chain is 4-hydroxy-3-methylbut-2-en-1-yl diphosphate synthase (flavodoxin) (377 aa).

Cys275, Cys278, Cys310, and Glu317 together coordinate [4Fe-4S] cluster.

It belongs to the IspG family. Requires [4Fe-4S] cluster as cofactor.

It carries out the reaction (2E)-4-hydroxy-3-methylbut-2-enyl diphosphate + oxidized [flavodoxin] + H2O + 2 H(+) = 2-C-methyl-D-erythritol 2,4-cyclic diphosphate + reduced [flavodoxin]. The protein operates within isoprenoid biosynthesis; isopentenyl diphosphate biosynthesis via DXP pathway; isopentenyl diphosphate from 1-deoxy-D-xylulose 5-phosphate: step 5/6. In terms of biological role, converts 2C-methyl-D-erythritol 2,4-cyclodiphosphate (ME-2,4cPP) into 1-hydroxy-2-methyl-2-(E)-butenyl 4-diphosphate. This is 4-hydroxy-3-methylbut-2-en-1-yl diphosphate synthase (flavodoxin) from Jannaschia sp. (strain CCS1).